Consider the following 117-residue polypeptide: Nascent polypeptide-associated complex protein (117 aa).

Positions 9-77 (PKQLKQMQRA…ARERSLEAEM (69 aa)) constitute an NAC-A/B domain.

The protein belongs to the NAC-alpha family. Homodimer. Interacts with the ribosome. Binds ribosomal RNA.

In terms of biological role, contacts the emerging nascent chain on the ribosome. The chain is Nascent polypeptide-associated complex protein from Methanothermobacter thermautotrophicus (strain ATCC 29096 / DSM 1053 / JCM 10044 / NBRC 100330 / Delta H) (Methanobacterium thermoautotrophicum).